Reading from the N-terminus, the 233-residue chain is Cytochrome c biogenesis ATP-binding export protein CcmA (233 aa).

An ABC transporter domain is found at 17–233 (FAGEDLLCVR…AAGLFLEDEG (217 aa)). 49–56 (GPNGSGKS) lines the ATP pocket.

The protein belongs to the ABC transporter superfamily. CcmA exporter (TC 3.A.1.107) family. The complex is composed of two ATP-binding proteins (CcmA) and two transmembrane proteins (CcmB).

Its subcellular location is the cell inner membrane. The enzyme catalyses heme b(in) + ATP + H2O = heme b(out) + ADP + phosphate + H(+). In terms of biological role, part of the ABC transporter complex CcmAB involved in the biogenesis of c-type cytochromes; once thought to export heme, this seems not to be the case, but its exact role is uncertain. Responsible for energy coupling to the transport system. The sequence is that of Cytochrome c biogenesis ATP-binding export protein CcmA from Rhodospirillum rubrum (strain ATCC 11170 / ATH 1.1.1 / DSM 467 / LMG 4362 / NCIMB 8255 / S1).